A 341-amino-acid chain; its full sequence is N-acetyl-gamma-glutamyl-phosphate reductase (341 aa).

Cys145 is a catalytic residue.

The protein belongs to the NAGSA dehydrogenase family. Type 1 subfamily.

The protein resides in the cytoplasm. It catalyses the reaction N-acetyl-L-glutamate 5-semialdehyde + phosphate + NADP(+) = N-acetyl-L-glutamyl 5-phosphate + NADPH + H(+). The protein operates within amino-acid biosynthesis; L-arginine biosynthesis; N(2)-acetyl-L-ornithine from L-glutamate: step 3/4. Its function is as follows. Catalyzes the NADPH-dependent reduction of N-acetyl-5-glutamyl phosphate to yield N-acetyl-L-glutamate 5-semialdehyde. The polypeptide is N-acetyl-gamma-glutamyl-phosphate reductase (Streptomyces clavuligerus).